A 66-amino-acid polypeptide reads, in one-letter code: Protein KleD (66 aa).

A DNA-binding region (H-T-H motif) is located at residues 33 to 52 (VAVRSGNEWQQVTKWVEPAR).

This is Protein KleD (kleD) from Escherichia coli.